Here is a 122-residue protein sequence, read N- to C-terminus: Large ribosomal subunit protein uL14 (122 aa).

Belongs to the universal ribosomal protein uL14 family. As to quaternary structure, part of the 50S ribosomal subunit. Forms a cluster with proteins L3 and L19. In the 70S ribosome, L14 and L19 interact and together make contacts with the 16S rRNA in bridges B5 and B8.

Functionally, binds to 23S rRNA. Forms part of two intersubunit bridges in the 70S ribosome. This chain is Large ribosomal subunit protein uL14, found in Desulfovibrio desulfuricans (strain ATCC 27774 / DSM 6949 / MB).